The chain runs to 395 residues: ATP phosphoribosyltransferase regulatory subunit (395 aa).

Belongs to the class-II aminoacyl-tRNA synthetase family. HisZ subfamily. As to quaternary structure, heteromultimer composed of HisG and HisZ subunits.

Its subcellular location is the cytoplasm. Its pathway is amino-acid biosynthesis; L-histidine biosynthesis; L-histidine from 5-phospho-alpha-D-ribose 1-diphosphate: step 1/9. In terms of biological role, required for the first step of histidine biosynthesis. May allow the feedback regulation of ATP phosphoribosyltransferase activity by histidine. This Thioalkalivibrio sulfidiphilus (strain HL-EbGR7) protein is ATP phosphoribosyltransferase regulatory subunit.